A 78-amino-acid polypeptide reads, in one-letter code: Acyl carrier protein (78 aa).

The region spanning 4–78 (AEIRDKVYDI…QQAIDYIVKK (75 aa)) is the Carrier domain. An O-(pantetheine 4'-phosphoryl)serine modification is found at serine 39.

Belongs to the acyl carrier protein (ACP) family. 4'-phosphopantetheine is transferred from CoA to a specific serine of apo-ACP by AcpS. This modification is essential for activity because fatty acids are bound in thioester linkage to the sulfhydryl of the prosthetic group.

It localises to the cytoplasm. Its pathway is lipid metabolism; fatty acid biosynthesis. Functionally, carrier of the growing fatty acid chain in fatty acid biosynthesis. The chain is Acyl carrier protein from Chlorobium luteolum (strain DSM 273 / BCRC 81028 / 2530) (Pelodictyon luteolum).